Reading from the N-terminus, the 485-residue chain is MAHQQQYIHGRYHASTSGEHFETINPATGEVIATVEHAGQAELDAAVESAKQGQKVWSAMSPVERGRILKKAAELLRENNEELARLEVLDTGKPLQEAIVVDIQTGADVIEYYAGLTDKIQGDYQDLGNGNFFYTRREPLGICAGIGAWNYPIQIAMWKSGPALAAGNAMIFKPSEETPLTALKLAEIFTEAGLPDGVFNVIQGDARTGQLITNHPDIDKVSFTGEVGTGKKVMAASAQSLKQVTMELGGKSPMIIFPDMPVDQAVSAAMLANFYTQGEVCTNGTRVFVHADMLDAFTKELKQRTEAMIIGDPMDMDTQVGALISKDHMQKVLGYIQAAKDAGATLLCGGYQVTENGLDKGAFVAPTVFTDCTDDMPQVRDEIFGPVMSVLSFTDEDEVIARANDTKLGLAAGVFTKDFARAHRVINQLQAGICWINSWGASPAEMPVGGYKQSGIGRENGIETLYHYTQNKSVFVDLNDIQSPY.

Thr-23, Ile-24, and Asp-90 together coordinate K(+). An NAD(+)-binding site is contributed by 147-149 (GAW). Catalysis depends on Lys-159, which acts as the Charge relay system. Residues 173–176 (KPSE) and 226–229 (EVGT) each bind NAD(+). Position 241 (Leu-241) interacts with K(+). The Proton acceptor role is filled by Glu-247. NAD(+) contacts are provided by Gly-249, Cys-281, and Glu-382. Cys-281 functions as the Nucleophile in the catalytic mechanism. Cys-281 is subject to Cysteine sulfenic acid (-SOH). 2 residues coordinate K(+): Lys-452 and Gly-455. Residue Glu-459 is the Charge relay system of the active site.

Belongs to the aldehyde dehydrogenase family. As to quaternary structure, dimer of dimers. The cofactor is K(+).

It catalyses the reaction betaine aldehyde + NAD(+) + H2O = glycine betaine + NADH + 2 H(+). Its pathway is amine and polyamine biosynthesis; betaine biosynthesis via choline pathway; betaine from betaine aldehyde: step 1/1. Its function is as follows. Involved in the biosynthesis of the osmoprotectant glycine betaine. Catalyzes the irreversible oxidation of betaine aldehyde to the corresponding acid. In Marinomonas sp. (strain MWYL1), this protein is Betaine aldehyde dehydrogenase.